The chain runs to 392 residues: Formate-dependent phosphoribosylglycinamide formyltransferase (392 aa).

Residues 22 to 23 (EL) and glutamate 82 contribute to the N(1)-(5-phospho-beta-D-ribosyl)glycinamide site. ATP-binding positions include arginine 114, lysine 155, 160-165 (SSGKGQ), 195-198 (EGVV), and glutamate 203. One can recognise an ATP-grasp domain in the interval 119–308 (RLAAEELGLP…EFALHVRAFL (190 aa)). Mg(2+)-binding residues include glutamate 267 and glutamate 279. N(1)-(5-phospho-beta-D-ribosyl)glycinamide contacts are provided by residues aspartate 286, lysine 355, and 362–363 (RR).

It belongs to the PurK/PurT family. As to quaternary structure, homodimer.

The catalysed reaction is N(1)-(5-phospho-beta-D-ribosyl)glycinamide + formate + ATP = N(2)-formyl-N(1)-(5-phospho-beta-D-ribosyl)glycinamide + ADP + phosphate + H(+). It participates in purine metabolism; IMP biosynthesis via de novo pathway; N(2)-formyl-N(1)-(5-phospho-D-ribosyl)glycinamide from N(1)-(5-phospho-D-ribosyl)glycinamide (formate route): step 1/1. Its function is as follows. Involved in the de novo purine biosynthesis. Catalyzes the transfer of formate to 5-phospho-ribosyl-glycinamide (GAR), producing 5-phospho-ribosyl-N-formylglycinamide (FGAR). Formate is provided by PurU via hydrolysis of 10-formyl-tetrahydrofolate. The protein is Formate-dependent phosphoribosylglycinamide formyltransferase of Salmonella arizonae (strain ATCC BAA-731 / CDC346-86 / RSK2980).